The following is a 129-amino-acid chain: Small ribosomal subunit protein uS11 (129 aa).

The protein belongs to the universal ribosomal protein uS11 family. Part of the 30S ribosomal subunit. Interacts with proteins S7 and S18. Binds to IF-3.

In terms of biological role, located on the platform of the 30S subunit, it bridges several disparate RNA helices of the 16S rRNA. Forms part of the Shine-Dalgarno cleft in the 70S ribosome. The sequence is that of Small ribosomal subunit protein uS11 from Chelativorans sp. (strain BNC1).